The sequence spans 216 residues: Adenylate kinase (216 aa).

Residue 10–15 (GAGKGT) participates in ATP binding. The tract at residues 30–59 (STGDIFRANIKEKTPLGIEAKRYMDNGQLV) is NMP. AMP is bound by residues Thr-31, Arg-36, 57-59 (QLV), 85-88 (GFPR), and Gln-92. Residues 126 to 163 (GRRVCTSCGASYHIRFNPPKIEGKCDICDNELIQRKDD) form an LID region. Arg-127 contacts ATP. Residues Cys-130 and Cys-133 each coordinate Zn(2+). 136–137 (SY) is an ATP binding site. Zn(2+) is bound by residues Cys-150 and Cys-153. Residues Arg-160 and Arg-171 each coordinate AMP. Position 199 (Glu-199) interacts with ATP.

The protein belongs to the adenylate kinase family. Monomer.

The protein localises to the cytoplasm. It carries out the reaction AMP + ATP = 2 ADP. Its pathway is purine metabolism; AMP biosynthesis via salvage pathway; AMP from ADP: step 1/1. Functionally, catalyzes the reversible transfer of the terminal phosphate group between ATP and AMP. Plays an important role in cellular energy homeostasis and in adenine nucleotide metabolism. This is Adenylate kinase from Clostridium botulinum (strain Loch Maree / Type A3).